A 283-amino-acid chain; its full sequence is Pantothenate synthetase (283 aa).

Position 30–37 (30–37 (MGALHEGH)) interacts with ATP. Residue His-37 is the Proton donor of the active site. Residue Gln-61 participates in (R)-pantoate binding. A beta-alanine-binding site is contributed by Gln-61. Position 147 to 150 (147 to 150 (GEKD)) interacts with ATP. Residue Gln-153 participates in (R)-pantoate binding. Residues Val-176 and 184–187 (VSSR) contribute to the ATP site.

The protein belongs to the pantothenate synthetase family. In terms of assembly, homodimer.

Its subcellular location is the cytoplasm. The catalysed reaction is (R)-pantoate + beta-alanine + ATP = (R)-pantothenate + AMP + diphosphate + H(+). It participates in cofactor biosynthesis; (R)-pantothenate biosynthesis; (R)-pantothenate from (R)-pantoate and beta-alanine: step 1/1. In terms of biological role, catalyzes the condensation of pantoate with beta-alanine in an ATP-dependent reaction via a pantoyl-adenylate intermediate. The chain is Pantothenate synthetase from Chlorobium luteolum (strain DSM 273 / BCRC 81028 / 2530) (Pelodictyon luteolum).